The primary structure comprises 360 residues: Fructose-bisphosphate aldolase 1 (360 aa).

Residue serine 63 participates in D-glyceraldehyde 3-phosphate binding. Aspartate 110 (proton donor) is an active-site residue. Positions 111, 145, 175, and 227 each coordinate Zn(2+). A dihydroxyacetone phosphate-binding site is contributed by glycine 228. Histidine 266 contributes to the Zn(2+) binding site. Position 267–269 (267–269 (GGS)) interacts with dihydroxyacetone phosphate.

This sequence belongs to the class II fructose-bisphosphate aldolase family. Homodimer. Zn(2+) serves as cofactor.

It catalyses the reaction beta-D-fructose 1,6-bisphosphate = D-glyceraldehyde 3-phosphate + dihydroxyacetone phosphate. The protein operates within carbohydrate degradation; glycolysis; D-glyceraldehyde 3-phosphate and glycerone phosphate from D-glucose: step 4/4. Its function is as follows. Catalyzes the aldol condensation of dihydroxyacetone phosphate (DHAP or glycerone-phosphate) with glyceraldehyde 3-phosphate (G3P) to form fructose 1,6-bisphosphate (FBP) in gluconeogenesis and the reverse reaction in glycolysis. In Paracoccidioides lutzii (strain ATCC MYA-826 / Pb01) (Paracoccidioides brasiliensis), this protein is Fructose-bisphosphate aldolase 1 (FBA1).